We begin with the raw amino-acid sequence, 674 residues long: Translation initiation factor IF-2 (674 aa).

Positions 174 to 344 constitute a tr-type G domain; it reads IRPPVVTVMG…LLVAELREIK (171 aa). Residues 183 to 190 are G1; that stretch reads GHVDHGKT. Position 183–190 (183–190) interacts with GTP; that stretch reads GHVDHGKT. The tract at residues 208 to 212 is G2; sequence GITQS. Positions 229–232 are G3; the sequence is DTPG. GTP contacts are provided by residues 229 to 233 and 283 to 286; these read DTPGH and NKID. A G4 region spans residues 283–286; that stretch reads NKID. The interval 320–322 is G5; the sequence is SAR.

The protein belongs to the TRAFAC class translation factor GTPase superfamily. Classic translation factor GTPase family. IF-2 subfamily.

The protein resides in the cytoplasm. Functionally, one of the essential components for the initiation of protein synthesis. Protects formylmethionyl-tRNA from spontaneous hydrolysis and promotes its binding to the 30S ribosomal subunits. Also involved in the hydrolysis of GTP during the formation of the 70S ribosomal complex. In Pseudothermotoga lettingae (strain ATCC BAA-301 / DSM 14385 / NBRC 107922 / TMO) (Thermotoga lettingae), this protein is Translation initiation factor IF-2.